Consider the following 100-residue polypeptide: Large ribosomal subunit protein uL23 (100 aa).

The protein belongs to the universal ribosomal protein uL23 family. As to quaternary structure, part of the 50S ribosomal subunit. Contacts protein L29, and trigger factor when it is bound to the ribosome.

Functionally, one of the early assembly proteins it binds 23S rRNA. One of the proteins that surrounds the polypeptide exit tunnel on the outside of the ribosome. Forms the main docking site for trigger factor binding to the ribosome. The chain is Large ribosomal subunit protein uL23 from Shewanella frigidimarina (strain NCIMB 400).